The primary structure comprises 153 residues: Endoribonuclease YbeY (153 aa).

The Zn(2+) site is built by H114, H118, and H124.

This sequence belongs to the endoribonuclease YbeY family. Requires Zn(2+) as cofactor.

The protein resides in the cytoplasm. Single strand-specific metallo-endoribonuclease involved in late-stage 70S ribosome quality control and in maturation of the 3' terminus of the 16S rRNA. This chain is Endoribonuclease YbeY, found in Shewanella baltica (strain OS223).